We begin with the raw amino-acid sequence, 171 residues long: CDP-archaeol synthase (171 aa).

The next 5 helical transmembrane spans lie at 7–27 (IFWA…PVLV), 54–74 (GFIG…FITP), 84–104 (VKLA…GSFI), 115–135 (PAIG…AYPV), and 141–161 (GQII…NYFA).

It belongs to the CDP-archaeol synthase family. Mg(2+) is required as a cofactor.

The protein localises to the cell membrane. It catalyses the reaction 2,3-bis-O-(geranylgeranyl)-sn-glycerol 1-phosphate + CTP + H(+) = CDP-2,3-bis-O-(geranylgeranyl)-sn-glycerol + diphosphate. It participates in membrane lipid metabolism; glycerophospholipid metabolism. Catalyzes the formation of CDP-2,3-bis-(O-geranylgeranyl)-sn-glycerol (CDP-archaeol) from 2,3-bis-(O-geranylgeranyl)-sn-glycerol 1-phosphate (DGGGP) and CTP. This reaction is the third ether-bond-formation step in the biosynthesis of archaeal membrane lipids. The polypeptide is CDP-archaeol synthase (Thermococcus kodakarensis (strain ATCC BAA-918 / JCM 12380 / KOD1) (Pyrococcus kodakaraensis (strain KOD1))).